The sequence spans 295 residues: Protoheme IX farnesyltransferase (295 aa).

Transmembrane regions (helical) follow at residues 30-50 (LVVL…HPLI), 51-71 (AVIS…INMW), 93-115 (ISRS…IMMI), 119-136 (YISG…IYVY), 148-168 (IVIG…SVTG), 175-195 (LVLF…LSLL), 219-239 (IHIL…GLFL), 244-264 (LYEI…FQVF), and 275-295 (MFTY…LSSF).

The protein belongs to the UbiA prenyltransferase family. Protoheme IX farnesyltransferase subfamily.

It localises to the cell inner membrane. It carries out the reaction heme b + (2E,6E)-farnesyl diphosphate + H2O = Fe(II)-heme o + diphosphate. It participates in porphyrin-containing compound metabolism; heme O biosynthesis; heme O from protoheme: step 1/1. In terms of biological role, converts heme B (protoheme IX) to heme O by substitution of the vinyl group on carbon 2 of heme B porphyrin ring with a hydroxyethyl farnesyl side group. This chain is Protoheme IX farnesyltransferase, found in Ehrlichia ruminantium (strain Welgevonden).